A 499-amino-acid chain; its full sequence is MFSSFETLILSFVSLFFMMIFIHSKWISSYSKMAKNLPPSPFGLPIIGNLHQLGMTPYNSLRTLAHKYGSLMLIHLGSVPVIVASSAEAAQEIMKTHDQIFSTRPKMNIASIVSFDAKIVAFSPYGEHWRQSKSVYLLNLLSTKRVQSFRHVREDETNLMLDVIENSCGSEIDLSNMIMSLTNDVVCRIAYGRKYYEDWFKELMKEVMDVLGVFSVGNYVPSLSWIDRLSGLEGRAYKAAKQLDAFLEGVVKQHETKSNESMRDQDVVDILLETQREQASAGTPFHRDTLKALMQEMFIAGTDTTSTAIEWEISEVIKHPRVMKKLQQELDEIAQGRQRITEEDLEDTQHPYLEAILKESMRLHIPVPLLLPREATHDVKVMGYDIAAGTQVLINAWMIARDPTIWEDADEFKPERFLDTNIDYKGLNFELLPFGAGRRGCPGIQFAMSVNKLALANLVYKFDFKLPNGLRLEQLDMTDSTGITVRRKYPLLVIPTARF.

A helical; Signal-anchor for type II membrane protein transmembrane segment spans residues 2–22 (FSSFETLILSFVSLFFMMIFI). Heme is bound at residue Cys-441.

The protein belongs to the cytochrome P450 family. The cofactor is heme.

Its subcellular location is the membrane. The enzyme catalyses (+)-costunolide + reduced [NADPH--hemoprotein reductase] + O2 = 3beta-hydroxycostunolide + oxidized [NADPH--hemoprotein reductase] + H2O + H(+). It catalyses the reaction parthenolide + reduced [NADPH--hemoprotein reductase] + O2 = 3beta-hydroxyparthenolide + oxidized [NADPH--hemoprotein reductase] + H2O + H(+). Its pathway is secondary metabolite biosynthesis; terpenoid biosynthesis. Functionally, involved in the biosynthesis of germacrene-derived sesquiterpene lactones. Component of the parthenolide biosynthetic pathway; parthenolide and conjugates are promising anti-cancer drugs highly active against colon cancer cells. Catalyzes the conversion of costunolide and parthenolide to 3-beta-hydroxycostunolide and 3-beta-hydroxyparthenolide, respectively. The protein is 3-beta-hydroxylase of Tanacetum parthenium (Feverfew).